The sequence spans 428 residues: C4-dicarboxylate transport protein (428 aa).

The next 8 membrane-spanning stretches (helical) occupy residues 8-28 (VLYV…HLYP), 44-64 (LIKM…IAGM), 78-98 (LLYF…ATHI), 148-168 (GEIL…AHLG), 184-204 (VLFG…FGAM), 222-242 (LIGT…GAIA), 307-327 (IYMT…LTWM), and 355-375 (AATL…ILGI).

Belongs to the dicarboxylate/amino acid:cation symporter (DAACS) (TC 2.A.23) family.

It is found in the cell inner membrane. In terms of biological role, responsible for the transport of dicarboxylates such as succinate, fumarate, and malate from the periplasm across the membrane. This is C4-dicarboxylate transport protein from Burkholderia thailandensis (strain ATCC 700388 / DSM 13276 / CCUG 48851 / CIP 106301 / E264).